Consider the following 236-residue polypeptide: Ribose-5-phosphate isomerase A (236 aa).

Substrate is bound by residues 28–31 (TGST), 83–86 (DGAD), and 96–99 (KGGG). Glutamate 105 (proton acceptor) is an active-site residue. Lysine 123 is a binding site for substrate.

Belongs to the ribose 5-phosphate isomerase family. Homodimer.

The enzyme catalyses aldehydo-D-ribose 5-phosphate = D-ribulose 5-phosphate. It functions in the pathway carbohydrate degradation; pentose phosphate pathway; D-ribose 5-phosphate from D-ribulose 5-phosphate (non-oxidative stage): step 1/1. Functionally, catalyzes the reversible conversion of ribose-5-phosphate to ribulose 5-phosphate. The protein is Ribose-5-phosphate isomerase A of Afipia carboxidovorans (strain ATCC 49405 / DSM 1227 / KCTC 32145 / OM5) (Oligotropha carboxidovorans).